The following is a 41-amino-acid chain: Trypsin inhibitor (41 aa).

3 cysteine pairs are disulfide-bonded: Cys-15-Cys-26, Cys-17-Cys-24, and Cys-29-Cys-37.

Its function is as follows. Has two active sites that simultaneously bind and inhibit trypsin. The sequence is that of Trypsin inhibitor from Trichosanthes kirilowii (Chinese snake gourd).